Consider the following 393-residue polypeptide: Probable acetyl-CoA acyltransferase (393 aa).

The active-site Acyl-thioester intermediate is the cysteine 88. Catalysis depends on proton acceptor residues histidine 349 and cysteine 378.

The protein belongs to the thiolase-like superfamily. Thiolase family.

It is found in the cytoplasm. It catalyses the reaction 2 acetyl-CoA = acetoacetyl-CoA + CoA. In Staphylococcus aureus (strain NCTC 8325 / PS 47), this protein is Probable acetyl-CoA acyltransferase.